The chain runs to 294 residues: 4-hydroxy-tetrahydrodipicolinate synthase (294 aa).

Thr46 is a pyruvate binding site. The active-site Proton donor/acceptor is the Tyr135. Residue Lys164 is the Schiff-base intermediate with substrate of the active site. Position 205 (Ile205) interacts with pyruvate.

It belongs to the DapA family. Homotetramer; dimer of dimers.

The protein resides in the cytoplasm. The enzyme catalyses L-aspartate 4-semialdehyde + pyruvate = (2S,4S)-4-hydroxy-2,3,4,5-tetrahydrodipicolinate + H2O + H(+). It participates in amino-acid biosynthesis; L-lysine biosynthesis via DAP pathway; (S)-tetrahydrodipicolinate from L-aspartate: step 3/4. Catalyzes the condensation of (S)-aspartate-beta-semialdehyde [(S)-ASA] and pyruvate to 4-hydroxy-tetrahydrodipicolinate (HTPA). In Nitratiruptor sp. (strain SB155-2), this protein is 4-hydroxy-tetrahydrodipicolinate synthase.